The sequence spans 298 residues: Acetylglutamate kinase (298 aa).

Substrate contacts are provided by residues 69–70, Arg-91, and Asn-196; that span reads GG.

Belongs to the acetylglutamate kinase family. ArgB subfamily.

The protein resides in the cytoplasm. It catalyses the reaction N-acetyl-L-glutamate + ATP = N-acetyl-L-glutamyl 5-phosphate + ADP. The protein operates within amino-acid biosynthesis; L-arginine biosynthesis; N(2)-acetyl-L-ornithine from L-glutamate: step 2/4. In terms of biological role, catalyzes the ATP-dependent phosphorylation of N-acetyl-L-glutamate. This Rhodopseudomonas palustris (strain TIE-1) protein is Acetylglutamate kinase.